A 161-amino-acid polypeptide reads, in one-letter code: Cyclic pyranopterin monophosphate synthase (161 aa).

Substrate is bound by residues 75 to 77 and 113 to 114; these read LCH and ME. Residue aspartate 128 is part of the active site.

It belongs to the MoaC family. Homohexamer; trimer of dimers.

It carries out the reaction (8S)-3',8-cyclo-7,8-dihydroguanosine 5'-triphosphate = cyclic pyranopterin phosphate + diphosphate. It participates in cofactor biosynthesis; molybdopterin biosynthesis. In terms of biological role, catalyzes the conversion of (8S)-3',8-cyclo-7,8-dihydroguanosine 5'-triphosphate to cyclic pyranopterin monophosphate (cPMP). This chain is Cyclic pyranopterin monophosphate synthase, found in Salmonella heidelberg (strain SL476).